A 492-amino-acid polypeptide reads, in one-letter code: Solute carrier family 2, facilitated glucose transporter member 1 (492 aa).

Position 1 is an N-acetylmethionine (Met1). The Cytoplasmic portion of the chain corresponds to 1–11 (MEPSSKKVTGR). Residues 12 to 33 (LMLAVGGAVLGSLQFGYNTGVI) form a helical membrane-spanning segment. Over 34–66 (NAPQKVIEEFYNQTWNHRYGESIPSTTLTTLWS) the chain is Extracellular. Asn45 carries N-linked (GlcNAc...) asparagine glycosylation. A helical transmembrane segment spans residues 67 to 87 (LSVAIFSVGGMIGSFSVGLFV). Topologically, residues 88–90 (NRF) are cytoplasmic. Residues 91–112 (GRRNSMLMMNLLAFVSAVLMGF) form a helical membrane-spanning segment. The Extracellular segment spans residues 113–120 (SKLGKSFE). A helical membrane pass occupies residues 121-144 (MLILGRFIIGVYCGLTTGFVPMYV). Residues 145-155 (GEVSPTALRGA) are Cytoplasmic-facing. Residues 156 to 176 (LGTLHQLGIVVGILIAQVFGL) traverse the membrane as a helical segment. Gln161 provides a ligand contact to D-glucose. The Extracellular portion of the chain corresponds to 177–185 (DSIMGNADL). The chain crosses the membrane as a helical span at residues 186–206 (WPLLLSVIFIPALLQCILLPF). The Cytoplasmic segment spans residues 207-271 (CPESPRFLLI…LFRSPAYRQP (65 aa)). Ser226 is modified (phosphoserine). The chain crosses the membrane as a helical span at residues 272–293 (ILIAVVLQLSQQLSGINAVFYY). D-glucose is bound by residues 282–283 (QQ) and Asn288. The Extracellular portion of the chain corresponds to 294 to 306 (STSIFEKAGVQQP). A helical membrane pass occupies residues 307-328 (VYATIGSGIVNTAFTVVSLFVV). Asn317 contacts D-glucose. The Cytoplasmic segment spans residues 329–334 (ERAGRR). Residues 335–355 (TLHLIGLAGMAGCAVLMTIAL) traverse the membrane as a helical segment. Over 356 to 365 (ALLEQLPWMS) the chain is Extracellular. A helical membrane pass occupies residues 366-388 (YLSIVAIFGFVAFFEVGPGPIPW). D-glucose-binding residues include Glu380 and Trp388. The Cytoplasmic segment spans residues 389 to 401 (FIVAELFSQGPRP). A helical membrane pass occupies residues 402–422 (AAVAVAGFSNWTSNFIVGMCF). Topologically, residues 423 to 429 (QYVEQLC) are extracellular. Residues 430 to 450 (GPYVFIIFTVLLVLFFIFTYF) form a helical membrane-spanning segment. Residues 451 to 492 (KVPETKGRTFDEIASGFRQGGASQSDKTPEELFHPLGADSQV) are Cytoplasmic-facing. Residue Ser465 is modified to Phosphoserine. Residues 468–492 (RQGGASQSDKTPEELFHPLGADSQV) are disordered. Thr478 carries the post-translational modification Phosphothreonine. Ser490 is modified (phosphoserine).

It belongs to the major facilitator superfamily. Sugar transporter (TC 2.A.1.1) family. Glucose transporter subfamily. In terms of assembly, found in a complex with ADD2, DMTN and SLC2A1. Interacts (via C-terminus cytoplasmic region) with DMTN. Interacts with SNX27; the interaction is required when endocytosed to prevent degradation in lysosomes and promote recycling to the plasma membrane. Interacts with STOM. Interacts with GIPC (via PDZ domain). Interacts with SGTA (via Gln-rich region). Interacts with isoform 1 of BSG. Interacts with SMIM43; the interaction may promote SLC2A1-mediated glucose transport to meet the energy needs of mesendoderm differentiation. Post-translationally, phosphorylation at Ser-226 by PKC promotes glucose uptake by increasing cell membrane localization. In terms of tissue distribution, detected in osteoblastic cells (at protein level). Detected in brain, and at lower levels in kidney, heart and lung.

It localises to the cell membrane. Its subcellular location is the photoreceptor inner segment. It catalyses the reaction D-glucose(out) = D-glucose(in). With respect to regulation, the uptake of glucose is inhibited by cytochalasin B. Glucose uptake is increased in response to phorbol ester 12-O-tetradecanoylphorbol-13-acetate (TPA) treatment: TPA-induced glucose uptake requires phosphorylation at Ser-226. Facilitative glucose transporter, which is responsible for constitutive or basal glucose uptake. Has a very broad substrate specificity; can transport a wide range of aldoses including both pentoses and hexoses. Most important energy carrier of the brain: present at the blood-brain barrier and assures the energy-independent, facilitative transport of glucose into the brain. In association with BSG and NXNL1, promotes retinal cone survival by increasing glucose uptake into photoreceptors. Required for mesendoderm differentiation. This is Solute carrier family 2, facilitated glucose transporter member 1 from Rattus norvegicus (Rat).